We begin with the raw amino-acid sequence, 330 residues long: Methionyl-tRNA formyltransferase (330 aa).

(6S)-5,6,7,8-tetrahydrofolate is bound at residue 117 to 120; the sequence is SLLP.

It belongs to the Fmt family.

The catalysed reaction is L-methionyl-tRNA(fMet) + (6R)-10-formyltetrahydrofolate = N-formyl-L-methionyl-tRNA(fMet) + (6S)-5,6,7,8-tetrahydrofolate + H(+). Attaches a formyl group to the free amino group of methionyl-tRNA(fMet). The formyl group appears to play a dual role in the initiator identity of N-formylmethionyl-tRNA by promoting its recognition by IF2 and preventing the misappropriation of this tRNA by the elongation apparatus. This Verminephrobacter eiseniae (strain EF01-2) protein is Methionyl-tRNA formyltransferase.